The following is a 567-amino-acid chain: Phosphoglucomutase-like protein 5 (567 aa).

The segment at 1–26 is disordered; that stretch reads MEGSPIPVLTVPTAPYEDQRPAGGGG. Position 120 is a phosphothreonine (T120). S122 is modified (phosphoserine).

Belongs to the phosphohexose mutase family. As to quaternary structure, interacts with DMD/dystrophin; the interaction is direct. Interacts with UTRN/utrophin. As to expression, detected in smooth and cardiac muscle at high levels and in skeletal muscle at low level. Present in other tissues due to vascular or other smooth muscle component. Low levels are present in liver, kidney, skin and brain (at protein level).

It localises to the cell junction. It is found in the adherens junction. Its subcellular location is the cytoplasm. The protein localises to the cytoskeleton. The protein resides in the cell membrane. It localises to the sarcolemma. In terms of biological role, component of adherens-type cell-cell and cell-matrix junctions. Has no phosphoglucomutase activity in vitro. This chain is Phosphoglucomutase-like protein 5, found in Homo sapiens (Human).